The following is a 137-amino-acid chain: Cell division protein SepF (137 aa).

The protein belongs to the SepF family. As to quaternary structure, homodimer. Interacts with FtsZ.

The protein localises to the cytoplasm. Cell division protein that is part of the divisome complex and is recruited early to the Z-ring. Probably stimulates Z-ring formation, perhaps through the cross-linking of FtsZ protofilaments. Its function overlaps with FtsA. In Thermoanaerobacter pseudethanolicus (strain ATCC 33223 / 39E) (Clostridium thermohydrosulfuricum), this protein is Cell division protein SepF.